Reading from the N-terminus, the 181-residue chain is Protein Syd (181 aa).

This sequence belongs to the Syd family.

The protein resides in the cell inner membrane. Its function is as follows. Interacts with the SecY protein in vivo. May bind preferentially to an uncomplexed state of SecY, thus functioning either as a chelating agent for excess SecY in the cell or as a regulatory factor that negatively controls the translocase function. This chain is Protein Syd, found in Shigella flexneri serotype 5b (strain 8401).